We begin with the raw amino-acid sequence, 103 residues long: Small ribosomal subunit protein uS10 (103 aa).

It belongs to the universal ribosomal protein uS10 family. In terms of assembly, part of the 30S ribosomal subunit.

In terms of biological role, involved in the binding of tRNA to the ribosomes. The polypeptide is Small ribosomal subunit protein uS10 (Syntrophobacter fumaroxidans (strain DSM 10017 / MPOB)).